The chain runs to 65 residues: Small ribosomal subunit protein eS27 (65 aa).

Zn(2+) contacts are provided by C21, C24, C40, and C43. The C4-type zinc-finger motif lies at 21–43; it reads CRDCGNVQVVFARPSSTVTCNIC.

It belongs to the eukaryotic ribosomal protein eS27 family. As to quaternary structure, part of the 30S ribosomal subunit. It depends on Zn(2+) as a cofactor.

This is Small ribosomal subunit protein eS27 from Thermoplasma acidophilum (strain ATCC 25905 / DSM 1728 / JCM 9062 / NBRC 15155 / AMRC-C165).